Reading from the N-terminus, the 96-residue chain is Small ribosomal subunit protein bS18 (96 aa).

Residues methionine 1–serine 20 form a disordered region.

The protein belongs to the bacterial ribosomal protein bS18 family. In terms of assembly, part of the 30S ribosomal subunit. Forms a tight heterodimer with protein bS6.

Binds as a heterodimer with protein bS6 to the central domain of the 16S rRNA, where it helps stabilize the platform of the 30S subunit. The sequence is that of Small ribosomal subunit protein bS18 from Anaplasma phagocytophilum (strain HZ).